A 407-amino-acid chain; its full sequence is MSGCPFLGGTLQLLSSNPRQAEEEDGSQGGVNKAAKGGIIYGDYLQLDKVLNAQVLQSEQKGNKIHDEHLFIVTHQAYELWFKQILWELDSVRDLFIKKHVRDERNMLKVVSRIHRITMIFKLLVDQFAVLETMTALDFFDFREYLSPASGFQSLQFRLLEQKIGVADHLRVPYNRRHYRDNFHGEESETLLSSEQEPTLLQLVEQWLERTPGLEKDGFNFWGKLQANIEEGLKREKHQVEKMEDTEVKQELLEDLNKQMETFTALFDSKRHEHLLSKGERRLSYKALQGALMINFYREEPRFQVPFQLLTALMEIDTLMTKWRYNHVCMVHRMIGSKAGTGGSSGYHYLRSTVSDRYKVFVDLFNLATFLVPRSWVPKLNPNIHKFPYTAECYDSSYNSCSSEDSD.

Substrate is bound by residues 71-75 (FIVTH) and Arg143. His327 provides a ligand contact to heme. Residue Thr341 participates in substrate binding.

This sequence belongs to the tryptophan 2,3-dioxygenase family. In terms of assembly, homotetramer. Dimer of dimers. Heme serves as cofactor.

It catalyses the reaction L-tryptophan + O2 = N-formyl-L-kynurenine. It functions in the pathway amino-acid degradation; L-tryptophan degradation via kynurenine pathway; L-kynurenine from L-tryptophan: step 1/2. Heme-dependent dioxygenase that catalyzes the oxidative cleavage of the L-tryptophan (L-Trp) pyrrole ring and converts L-tryptophan to N-formyl-L-kynurenine. Catalyzes the oxidative cleavage of the indole moiety. The protein is Tryptophan 2,3-dioxygenase B of Danio rerio (Zebrafish).